We begin with the raw amino-acid sequence, 426 residues long: Gamma-glutamyl phosphate reductase (426 aa).

This sequence belongs to the gamma-glutamyl phosphate reductase family.

The protein localises to the cytoplasm. The catalysed reaction is L-glutamate 5-semialdehyde + phosphate + NADP(+) = L-glutamyl 5-phosphate + NADPH + H(+). The protein operates within amino-acid biosynthesis; L-proline biosynthesis; L-glutamate 5-semialdehyde from L-glutamate: step 2/2. Catalyzes the NADPH-dependent reduction of L-glutamate 5-phosphate into L-glutamate 5-semialdehyde and phosphate. The product spontaneously undergoes cyclization to form 1-pyrroline-5-carboxylate. This Cupriavidus pinatubonensis (strain JMP 134 / LMG 1197) (Cupriavidus necator (strain JMP 134)) protein is Gamma-glutamyl phosphate reductase.